The sequence spans 365 residues: Terpene cyclase 4 (365 aa).

The span at 1-11 (MVPSLITPPPS) shows a compositional bias: pro residues. A disordered region spans residues 1 to 20 (MVPSLITPPPSRSGEATPQK). The Mg(2+) site is built by D118, N260, and S264. Residues 118-122 (DDPFD) carry the D(D/E)XX(D/E) motif motif. The NSE motif signature appears at 260 to 268 (NDLCSYRKD). The short motif at 341–348 (WSLYTFRY) is the WxxxxxRY motif element. Positions 347 and 348 each coordinate (2E,6E)-farnesyl diphosphate.

The protein belongs to the terpene synthase family. As to quaternary structure, homodimer. Mg(2+) is required as a cofactor.

The enzyme catalyses (2E,6E)-farnesyl diphosphate + H2O = koraiol + diphosphate. Its pathway is sesquiterpene biosynthesis. Functionally, terpene cyclase that catalyzes the cyclization of farnesyl diphosphate (FPP) to the sesquiterpene koraiol. This chain is Terpene cyclase 4, found in Gibberella fujikuroi (strain CBS 195.34 / IMI 58289 / NRRL A-6831) (Bakanae and foot rot disease fungus).